The following is a 191-amino-acid chain: Holliday junction branch migration complex subunit RuvA (191 aa).

Positions 1 to 64 are domain I; the sequence is MIGRITGTLA…EDAHLLYGFG (64 aa). Positions 65-138 are domain II; sequence SEVERAAFRE…KGKPVFAGAL (74 aa). Residues 138–141 form a flexible linker region; sequence LASV. The segment at 142–191 is domain III; that stretch reads PSAGASDDVRQALLALGYNERETAATVRELPAGLAVGEAIRQALRALSRA.

This sequence belongs to the RuvA family. In terms of assembly, homotetramer. Forms an RuvA(8)-RuvB(12)-Holliday junction (HJ) complex. HJ DNA is sandwiched between 2 RuvA tetramers; dsDNA enters through RuvA and exits via RuvB. An RuvB hexamer assembles on each DNA strand where it exits the tetramer. Each RuvB hexamer is contacted by two RuvA subunits (via domain III) on 2 adjacent RuvB subunits; this complex drives branch migration. In the full resolvosome a probable DNA-RuvA(4)-RuvB(12)-RuvC(2) complex forms which resolves the HJ.

It localises to the cytoplasm. Its function is as follows. The RuvA-RuvB-RuvC complex processes Holliday junction (HJ) DNA during genetic recombination and DNA repair, while the RuvA-RuvB complex plays an important role in the rescue of blocked DNA replication forks via replication fork reversal (RFR). RuvA specifically binds to HJ cruciform DNA, conferring on it an open structure. The RuvB hexamer acts as an ATP-dependent pump, pulling dsDNA into and through the RuvAB complex. HJ branch migration allows RuvC to scan DNA until it finds its consensus sequence, where it cleaves and resolves the cruciform DNA. The sequence is that of Holliday junction branch migration complex subunit RuvA from Thiobacillus denitrificans (strain ATCC 25259 / T1).